Reading from the N-terminus, the 514-residue chain is Cytochrome P450 monooxygenase verB (514 aa).

A helical membrane pass occupies residues 5 to 25 (WLSASVLITAVILLVDYLNYY). Position 457 (Cys457) interacts with heme.

This sequence belongs to the cytochrome P450 family. Requires heme as cofactor.

It is found in the membrane. It functions in the pathway mycotoxin biosynthesis. In terms of biological role, cytochrome P450 monooxygenase; part of the gene cluster that mediates the biosynthesis of 11'-deoxyverticillin A, one of the dimeric epipolythiodioxopiperazines (ETPs) from the verticillin family that act as mycotoxins. 11'-deoxyverticillin A is required for normal conidiation. The nonribosomal peptide synthetase verP is speculated to be responsible for condensation of amino acids to form the carbon skeleton of verticillin, whereas the cluster-specific tailoring enzymes are involved in further modifications leading to the production of 11'-deoxyverticillin A. The sequence is that of Cytochrome P450 monooxygenase verB from Clonostachys rogersoniana.